Here is a 122-residue protein sequence, read N- to C-terminus: Large ribosomal subunit protein uL18 (122 aa).

It belongs to the universal ribosomal protein uL18 family. As to quaternary structure, part of the 50S ribosomal subunit; part of the 5S rRNA/L5/L18/L25 subcomplex. Contacts the 5S and 23S rRNAs.

Functionally, this is one of the proteins that bind and probably mediate the attachment of the 5S RNA into the large ribosomal subunit, where it forms part of the central protuberance. In Lachnoclostridium phytofermentans (strain ATCC 700394 / DSM 18823 / ISDg) (Clostridium phytofermentans), this protein is Large ribosomal subunit protein uL18.